Consider the following 613-residue polypeptide: MAEGVFQGAIGIDLGTTYSCVATYESSVEIIANEQGNRVTPSFVAFTPEERLIGDAAKNQAALNPENTVFDAKRLIGRRFDDESVQKDRKTWPFKLIDVEGNPVVEVQYLGETKTFSPQEISSMVLTKMKEIAEAKIGQKVEKAVITVPAYFNDAQRQATKDAGSISGLNVLRIINEPTAAAIAYGLGAGKSEKERHVLIFDLGGGTFDVSLLHIAGGVYTVKSTSGNTHLGGQDFDTNMLEHFKNEFKKKTGNDISGDARALRRLRTACERAKRTLSSVTQTTIEVDSLYNGDDFETSITRARFEDLNSSLFKSTLEPVEQVLKDAKVPKTEIDEVVLVGGSTRIPKVQKMLSDFFEGKQLEKSINPDEAVAYGAAVQGAILTGQSTSEDTKDLLLLDVAPLSLGVGMQGDIFGIVVPRNTTVPTIKRRTFTTVADHQSTVQFPVYQGERVNCKENTLLGEFDLKNIPPMQAGEPVLEAIFEVDANGILKVTAVEKSTGKSANITISNAVGRLSSDEIEKMVNQAEEFKAADEAFAKKHEARQRLESYVASIEQQVTDPVLSSKLKRGSKTKIESALSDALASLEIQDASTDDLRKAEVGLKRVVTKAMSSR.

The segment at Met-1 to Asp-391 is nucleotide binding domain (NBD). ATP contacts are provided by residues Thr-16–Tyr-18, Lys-73, Gly-205–Thr-207, Glu-271–Ser-278, and Gly-342. The segment at Thr-392 to Pro-402 is inter-domain linker. The segment at Leu-403 to Arg-613 is substrate binding domain (SBD). The lid domain (SBDalpha) stretch occupies residues Ser-516–Ser-612. A Nuclear export signal motif is present at residues Ile-574–Leu-582.

Belongs to the heat shock protein 70 family. Ssb-type Hsp70 subfamily. Binds to ribosomes. Binds close to the ribosomal tunnel exit via contacts with both ribosomal proteins and rRNA. Directly interacts with nascent polypeptides. This interaction is dependent on the ribosome-associated complex (RAC). Interacts with SSE1. Interacts with FES1.

It localises to the cytoplasm. The enzyme catalyses ATP + H2O = ADP + phosphate + H(+). In terms of biological role, ribosome-bound, Hsp70-type chaperone that assists in the cotranslational folding of newly synthesized proteins in the cytosol. Stimulates folding by interacting with nascent chains, binding to short, largely hydrophobic sequences exposed by unfolded proteins, thereby stabilizing longer, more slowly translated, and aggregation-prone nascent polypeptides and domains that cannot fold stably until fully synthesized. The Hsp70-protein substrate interaction depends on ATP-binding and on allosteric regulation between the NBD and the SBD. The ATP-bound state is characterized by a fast exchange rate of substrate (low affinity state), while in the ADP-bound state exchange is much slower (high affinity state). During the Hsp70 cycle, the chaperone switches between the ATP-bound state (open conformation) and the ADP-bound state (closed conformation) by major conformational rearrangements involving mainly the lid domain. Ssb cooperates with a specific Hsp40/Hsp70 co-chaperone termed the ribosome-associated complex (RAC), which stimulates the ATPase activity of the ribosome-associated pool of Ssbs and switches it to the high affinity substrate binding state. Hsp110 chaperone SSE1 and FES1 act as nucleotide exchange factors that cause substrate release. The chain is Ribosome-associated molecular chaperone SSB1 (SSB1) from Zygosaccharomyces rouxii (strain ATCC 2623 / CBS 732 / NBRC 1130 / NCYC 568 / NRRL Y-229).